The following is a 172-amino-acid chain: UPF0398 protein gbs0290 (172 aa).

The protein belongs to the UPF0398 family.

This is UPF0398 protein gbs0290 from Streptococcus agalactiae serotype III (strain NEM316).